We begin with the raw amino-acid sequence, 448 residues long: Probable glycine dehydrogenase (decarboxylating) subunit 1 (448 aa).

The protein belongs to the GcvP family. N-terminal subunit subfamily. The glycine cleavage system is composed of four proteins: P, T, L and H. In this organism, the P 'protein' is a heterodimer of two subunits.

It carries out the reaction N(6)-[(R)-lipoyl]-L-lysyl-[glycine-cleavage complex H protein] + glycine + H(+) = N(6)-[(R)-S(8)-aminomethyldihydrolipoyl]-L-lysyl-[glycine-cleavage complex H protein] + CO2. Its function is as follows. The glycine cleavage system catalyzes the degradation of glycine. The P protein binds the alpha-amino group of glycine through its pyridoxal phosphate cofactor; CO(2) is released and the remaining methylamine moiety is then transferred to the lipoamide cofactor of the H protein. This is Probable glycine dehydrogenase (decarboxylating) subunit 1 from Exiguobacterium sibiricum (strain DSM 17290 / CCUG 55495 / CIP 109462 / JCM 13490 / 255-15).